The sequence spans 273 residues: Octanoyltransferase LipM (273 aa).

In terms of domain architecture, BPL/LPL catalytic spans 32-240 (GEIPPTLRFY…GFSEILNIEL (209 aa)). The active-site Acyl-thioester intermediate is the Cys-142.

This sequence belongs to the octanoyltransferase LipM family. As to quaternary structure, monomer.

The enzyme catalyses octanoyl-[ACP] + L-lysyl-[protein] = N(6)-octanoyl-L-lysyl-[protein] + holo-[ACP] + H(+). It functions in the pathway protein modification; protein lipoylation via endogenous pathway; protein N(6)-(lipoyl)lysine from octanoyl-[acyl-carrier-protein]. Catalyzes the transfer of endogenously produced octanoic acid from octanoyl-acyl-carrier-protein onto the lipoyl domain of GcvH, an intermediate carrier during protein lipoylation. This chain is Octanoyltransferase LipM, found in Oceanobacillus iheyensis (strain DSM 14371 / CIP 107618 / JCM 11309 / KCTC 3954 / HTE831).